Here is a 129-residue protein sequence, read N- to C-terminus: Short-chain dehydrogenase/reductase homolog YusR (129 aa).

It belongs to the short-chain dehydrogenases/reductases (SDR) family.

The polypeptide is Short-chain dehydrogenase/reductase homolog YusR (yusR) (Bacillus subtilis (strain 168)).